A 236-amino-acid polypeptide reads, in one-letter code: Ribose-5-phosphate isomerase A (236 aa).

Substrate is bound by residues threonine 31–threonine 34, aspartate 84–aspartate 87, and lysine 97–glycine 100. Glutamate 106 serves as the catalytic Proton acceptor. Lysine 124 is a substrate binding site.

Belongs to the ribose 5-phosphate isomerase family. In terms of assembly, homodimer.

The catalysed reaction is aldehydo-D-ribose 5-phosphate = D-ribulose 5-phosphate. It functions in the pathway carbohydrate degradation; pentose phosphate pathway; D-ribose 5-phosphate from D-ribulose 5-phosphate (non-oxidative stage): step 1/1. Catalyzes the reversible conversion of ribose-5-phosphate to ribulose 5-phosphate. The polypeptide is Ribose-5-phosphate isomerase A (Polynucleobacter asymbioticus (strain DSM 18221 / CIP 109841 / QLW-P1DMWA-1) (Polynucleobacter necessarius subsp. asymbioticus)).